We begin with the raw amino-acid sequence, 328 residues long: Serine protease 48 (328 aa).

A signal peptide spans 1 to 20 (MGPAGCAFTLLLLLGISVCG). The region spanning 28-267 (VVGGQDAAAG…YQKWINATIS (240 aa)) is the Peptidase S1 domain. Cys53 and Cys69 are oxidised to a cystine. Catalysis depends on charge relay system residues His68 and Asp114. 3 cysteine pairs are disulfide-bonded: Cys148–Cys226, Cys181–Cys205, and Cys216–Cys244. Ser220 functions as the Charge relay system in the catalytic mechanism. Asn263 carries N-linked (GlcNAc...) asparagine glycosylation.

Belongs to the peptidase S1 family.

Its subcellular location is the secreted. This Homo sapiens (Human) protein is Serine protease 48 (PRSS48).